The sequence spans 159 residues: Crossover junction endodeoxyribonuclease RuvC (159 aa).

Catalysis depends on residues D7, E67, and D139. The Mg(2+) site is built by D7, E67, and D139.

Belongs to the RuvC family. As to quaternary structure, homodimer which binds Holliday junction (HJ) DNA. The HJ becomes 2-fold symmetrical on binding to RuvC with unstacked arms; it has a different conformation from HJ DNA in complex with RuvA. In the full resolvosome a probable DNA-RuvA(4)-RuvB(12)-RuvC(2) complex forms which resolves the HJ. It depends on Mg(2+) as a cofactor.

It is found in the cytoplasm. The catalysed reaction is Endonucleolytic cleavage at a junction such as a reciprocal single-stranded crossover between two homologous DNA duplexes (Holliday junction).. In terms of biological role, the RuvA-RuvB-RuvC complex processes Holliday junction (HJ) DNA during genetic recombination and DNA repair. Endonuclease that resolves HJ intermediates. Cleaves cruciform DNA by making single-stranded nicks across the HJ at symmetrical positions within the homologous arms, yielding a 5'-phosphate and a 3'-hydroxyl group; requires a central core of homology in the junction. The consensus cleavage sequence is 5'-(A/T)TT(C/G)-3'. Cleavage occurs on the 3'-side of the TT dinucleotide at the point of strand exchange. HJ branch migration catalyzed by RuvA-RuvB allows RuvC to scan DNA until it finds its consensus sequence, where it cleaves and resolves the cruciform DNA. The chain is Crossover junction endodeoxyribonuclease RuvC from Orientia tsutsugamushi (strain Ikeda) (Rickettsia tsutsugamushi).